Reading from the N-terminus, the 518-residue chain is Efflux pump terJ (518 aa).

Residues 43-63 (IAFIVVVCMAQLVSQAGLGQV) form a helical membrane-spanning segment. N-linked (GlcNAc...) asparagine glycosylation is present at Asn-79. 12 helical membrane-spanning segments follow: residues 82–102 (QLSW…LGAG), 112–132 (LLFT…AFAE), 135–155 (GPVF…FLLP), 177–197 (AFGS…ALAA), 204–224 (WGFW…IFWV), 244–264 (IAGC…LNMA), 272–292 (PYIY…GYIE), 311–331 (FVLA…FYGW), 339–359 (GISP…GFVA), 364–384 (GLIL…AAFC), 400–420 (WAQL…SFPA), and 439–459 (SLVA…GAIV). An N-linked (GlcNAc...) asparagine glycan is attached at Asn-466. A helical membrane pass occupies residues 477 to 497 (AWYLGVGLAASGIILTMFFAL).

The protein belongs to the major facilitator superfamily.

It localises to the cell membrane. Functionally, efflux pump that might be required for efficient secretion of terrein or other secondary metabolies produced by the terrein genne cluster. The protein is Efflux pump terJ of Aspergillus terreus (strain NIH 2624 / FGSC A1156).